Reading from the N-terminus, the 418-residue chain is Nuclear hormone receptor family member nhr-209 (418 aa).

The segment at residues 43–121 (PEKCAVCKNA…VGMDSTAIRA (79 aa)) is a DNA-binding region (nuclear receptor). 2 NR C4-type zinc fingers span residues 46-66 (CAVC…CNGC) and 82-104 (CMNH…CKGC). One can recognise an NR LBD domain in the interval 174–414 (TIPDGFEDMR…SHPPKSLFDE (241 aa)). The segment at 403–414 (ECSHPPKSLFDE) is AF-2.

The protein belongs to the nuclear hormone receptor family.

Its subcellular location is the nucleus. In terms of biological role, transcriptional regulator. Plays a role in modulation of lifespan and immunity. In Caenorhabditis elegans, this protein is Nuclear hormone receptor family member nhr-209.